Consider the following 545-residue polypeptide: MAAKDVKFGNDARVKMLRGVNVLADAVKVTLGPKGRNVVLDKSFGAPVITKDGVSVAREIELEDKFENMGAQMVKEVASKANDSAGDGTTTATVLAQSIVNEGLKAVAAGMNPMDLKRGIDKAVVAAVEELKKLSVPCSDPKAIAQVGTISANSDETVGKLIAQAMDKVGKEGVITVEEGSGLQDELDVVEGMQFDRGYLSPYFVNKPESGTVELEHPFILLADKKISNIREMLPILESVAKAGKPLLIIAEDVEGEALATLVVNNMRGIVKVTAVKAPGFGDRRKAMLQDIAVLTAGTVISEEIGLELEKATLEDMGQAKRVVITKDATTIIDGVGNKSAINSRVAQINQQRDEATSDYDREKLQERVAKLAGGVAVIKVGAATEVEMKEKKARVEDALHATRAAVEEGVVAGGGVALIRVANAIRNLCGDNEDQNVGIKVARRAMEAPLRQIMANAGEEPSVIANNVRSGEGNTGYNAATEKYGNMIELGILDPTKVTRSALQYAASIAGLMITTECMVTELPKEDKPDLGNAGAGGNMGGMM.

ATP is bound by residues 30 to 33 (TLGP), lysine 51, 87 to 91 (DGTTT), glycine 415, 479 to 481 (NAA), and aspartate 495. The interval 526–545 (KEDKPDLGNAGAGGNMGGMM) is disordered. Positions 535-545 (AGAGGNMGGMM) are enriched in gly residues.

This sequence belongs to the chaperonin (HSP60) family. In terms of assembly, forms a cylinder of 14 subunits composed of two heptameric rings stacked back-to-back. Interacts with the co-chaperonin GroES.

The protein resides in the cytoplasm. The catalysed reaction is ATP + H2O + a folded polypeptide = ADP + phosphate + an unfolded polypeptide.. Functionally, together with its co-chaperonin GroES, plays an essential role in assisting protein folding. The GroEL-GroES system forms a nano-cage that allows encapsulation of the non-native substrate proteins and provides a physical environment optimized to promote and accelerate protein folding. The polypeptide is Chaperonin GroEL (Blochmanniella pennsylvanica (strain BPEN)).